Consider the following 342-residue polypeptide: S-adenosylmethionine:tRNA ribosyltransferase-isomerase (342 aa).

This sequence belongs to the QueA family. Monomer.

The protein resides in the cytoplasm. It catalyses the reaction 7-aminomethyl-7-carbaguanosine(34) in tRNA + S-adenosyl-L-methionine = epoxyqueuosine(34) in tRNA + adenine + L-methionine + 2 H(+). The protein operates within tRNA modification; tRNA-queuosine biosynthesis. In terms of biological role, transfers and isomerizes the ribose moiety from AdoMet to the 7-aminomethyl group of 7-deazaguanine (preQ1-tRNA) to give epoxyqueuosine (oQ-tRNA). In Streptococcus pneumoniae serotype 4 (strain ATCC BAA-334 / TIGR4), this protein is S-adenosylmethionine:tRNA ribosyltransferase-isomerase.